Reading from the N-terminus, the 84-residue chain is Beta-defensin 119 (84 aa).

A signal peptide spans 1–21 (MKLLYLFLAILLVIEEPVISG). 3 disulfide bridges follow: C28-C55, C35-C49, and C39-C56.

The protein belongs to the beta-defensin family.

Its subcellular location is the secreted. Functionally, has antibacterial activity. This is Beta-defensin 119 (DEFB119) from Pongo pygmaeus (Bornean orangutan).